The primary structure comprises 244 residues: 6-carboxyhexanoate--CoA ligase (244 aa).

The protein belongs to the BioW family. Homodimer. Requires Mg(2+) as cofactor.

It carries out the reaction heptanedioate + ATP + CoA = 6-carboxyhexanoyl-CoA + AMP + diphosphate. It participates in metabolic intermediate metabolism; pimeloyl-CoA biosynthesis; pimeloyl-CoA from pimelate: step 1/1. Functionally, catalyzes the transformation of pimelate into pimeloyl-CoA with concomitant hydrolysis of ATP to AMP. This is 6-carboxyhexanoate--CoA ligase from Methanococcus maripaludis (strain DSM 14266 / JCM 13030 / NBRC 101832 / S2 / LL).